We begin with the raw amino-acid sequence, 728 residues long: MCGSDDSFDDFVPDSQEPASSRTRNQDHLDDDEVPCSQRPDAANDTMVEDLDEGDEPAHDESEDIIKILVATDIHCGYGENKANIHMDAVNTFEEVLQIATEQKVDMILLGGDLFHENNPSREVQHRVTQLLRQYCLNGNPIALEFLSDASVNFNQSVFGHVNYYDQNLNVGLPIFTIHGNHDDLSGKGLTALDLLHESGLVNLFGKHSNIQEFIVSPILLRKGETRLALYGIGSQRDDRLVRAFKNNSISFLRPNAGAEDWFNLFVLHQNRPRRAMHRSTGNFLPESLIPQFFDLLIWGHEHECKPDPQYVASSEAVGDGFYILQPGSTVATSLTPEEALQKNAFLIKIKGRKFASKPIPLQTVRPMVCDELLLDKIPPGSRPILKTDRPKHTDGRYIDEIAIEAKINEMITTAKAKRRPRQPELPLIRLKVIYDGDWLNITPANAKRIGLRYENVVANAVDMVFIKKNNKPKEGKLQTENEKNITEMADEMGQVSATNLQTIINDYFINQPLVDQMTVLKPIGIGRALEQYSAIEEGGLATSANRNFDSCLMHQIDVVRKTLKKMPLPPINDPSDLDKFRDLITKDLYDMKKADSERFKNPVADVEMEEDEDDPQYYMPPQSTSRTNYASGSEDEVANSDEEMGSSISRHSKQPTTRGRGRGARGAGASRETTRGRSNKVVSTRQIDSDGFEIINDSPSPPPASRSTRGKARGKSAPSKKRDLSFF.

Acidic residues predominate over residues 1 to 12 (MCGSDDSFDDFV). A disordered region spans residues 1 to 45 (MCGSDDSFDDFVPDSQEPASSRTRNQDHLDDDEVPCSQRPDAAND). Mn(2+) contacts are provided by aspartate 73, histidine 75, aspartate 113, and asparagine 181. Histidine 182 (proton donor) is an active-site residue. Positions 269, 301, and 303 each coordinate Mn(2+). Residues 601 to 728 (KNPVADVEME…PSKKRDLSFF (128 aa)) form a disordered region. Over residues 607–616 (VEMEEDEDDP) the composition is skewed to acidic residues. Polar residues predominate over residues 622-632 (PQSTSRTNYAS). The segment covering 634-645 (SEDEVANSDEEM) has biased composition (acidic residues).

It belongs to the MRE11/RAD32 family. Component of the MRN complex composed of two heterodimers rad-50 and mre-11 associated with a single nbs-1. Mn(2+) is required as a cofactor.

It localises to the nucleus. The protein localises to the chromosome. Its function is as follows. Core component of the MRN complex, which plays a central role in double-strand break (DSB) repair, DNA recombination, maintenance of telomere integrity and meiosis. The MRN complex is involved in the repair of DNA double-strand breaks (DSBs) via homologous recombination (HR), an error-free mechanism which primarily occurs during S and G2 phases. The complex (1) mediates the end resection of damaged DNA, which generates proper single-stranded DNA, a key initial steps in HR, and is (2) required for the recruitment of other repair factors and efficient activation of ATM and ATR upon DNA damage. Within the MRN complex, mre-11 possesses both single-strand endonuclease activity and double-strand-specific 3'-5' exonuclease activity. Mre-11 first endonucleolytically cleaves the 5' strand at DNA DSB ends to prevent non-homologous end joining (NHEJ) and licence HR. It then generates a single-stranded DNA gap via 3' to 5' exonucleolytic degradation, which is required for single-strand invasion and recombination. Required for meiotic crossing over and chiasma formation. Pachytene morphology and homolog pairing are normal. Vital in long term for maintenance of reproductive capacity of subsequent generations. The protein is Double-strand break repair protein mre-11 of Caenorhabditis elegans.